Reading from the N-terminus, the 298-residue chain is Iron-regulated virulence regulatory protein IrgB (298 aa).

Positions 1–59 (MQDLSAVKAFHALCQHKSLTAAAKALEQPKSTLSRRLAQLEEDLGQSLLMRQGNRLTLT) constitute an HTH lysR-type domain. The segment at residues 19 to 38 (LTAAAKALEQPKSTLSRRLA) is a DNA-binding region (H-T-H motif).

This sequence belongs to the LysR transcriptional regulatory family.

In terms of biological role, transcription activation of the irgA gene. In the presence of sufficient iron, transcription of both irgA and irgB is negatively regulated by a fur-like protein. In low iron conditions, negative regulation of transcription is removed, and production of irgB leads to positive transcriptional activation of irgA. This Vibrio cholerae serotype O1 (strain ATCC 39315 / El Tor Inaba N16961) protein is Iron-regulated virulence regulatory protein IrgB (irgB).